Reading from the N-terminus, the 184-residue chain is ADP-ribosylation factor-like protein 2 (184 aa).

Gly2 carries N-myristoyl glycine lipidation. Residues 23-30 (GLDNAGKT), 66-70 (DVGGQ), Gly68, and 125-128 (NKSD) each bind GTP.

Belongs to the small GTPase superfamily. Arf family.

The protein resides in the cytoplasm. The protein localises to the cell membrane. Its subcellular location is the cytoskeleton. It is found in the microtubule organizing center. It localises to the centrosome. In terms of biological role, GTP-binding protein that functions in embryogenesis, cytokinesis, germline development and microtubulule cytoskeleton dynamics. The polypeptide is ADP-ribosylation factor-like protein 2 (evl-20.1) (Caenorhabditis briggsae).